Consider the following 68-residue polypeptide: Glucagon-1 (68 aa).

It belongs to the glucagon family.

It localises to the secreted. Functionally, promotes hydrolysis of glycogen and lipids, and raises the blood sugar level. This is Glucagon-1 (gcg) from Oncorhynchus kisutch (Coho salmon).